The sequence spans 351 residues: 3-ketosteroid-9-alpha-monooxygenase, ferredoxin reductase component (351 aa).

An FAD-binding FR-type domain is found at 10-116; sequence SRSVILTVSA…LPPAGVFTPK (107 aa). One can recognise a 2Fe-2S ferredoxin-type domain in the interval 264 to 351; sequence ATVEVELDGE…PVTDHLKIEF (88 aa). [2Fe-2S] cluster is bound by residues Cys300, Cys305, Cys308, and Cys338.

The two-component system 3-ketosteroid-9-alpha-monooxygenase is composed of an oxygenase component KshA and a reductase component KshB. It depends on FAD as a cofactor. [2Fe-2S] cluster is required as a cofactor.

It catalyses the reaction androsta-1,4-diene-3,17-dione + 2 reduced [2Fe-2S]-[ferredoxin] + O2 + 2 H(+) = 9alpha-hydroxyandrosta-1,4-diene-3,17-dione + 2 oxidized [2Fe-2S]-[ferredoxin] + H2O. It functions in the pathway steroid metabolism; cholesterol degradation. Its activity is regulated as follows. KSH activity is completely inhibited by zinc ions. KshB is specifically inhibited by Cu(2+) ions. Probably involved in the degradation of cholesterol. In vitro, catalyzes the introduction of a 9alpha-hydroxyl moiety into the ring B of 3-ketosteroid substrates such as 1,4-androstadiene-3,17-dione (ADD), 4-androstene-3,17-dione (AD), 4-androstene-17beta-ol-3-one (testosterone), 4-pregnene-3,20-dione (progesterone), 19-nor-4-androstene-3,17-dione (nordion), 1-(5alpha)-androstene-3,17-dione, 5alpha-androstane-3,17-dione and 5beta-androstane-3,17-dione. KSH has the highest activity with 3-keto-Delta4 steroid substrates. The polypeptide is 3-ketosteroid-9-alpha-monooxygenase, ferredoxin reductase component (Rhodococcus rhodochrous).